Reading from the N-terminus, the 455-residue chain is Venom prothrombin activator notecarin-D1 (455 aa).

The first 20 residues, 1 to 20 (MAPQLLLCLILTFLWSLPEA), serve as a signal peptide directing secretion. A propeptide spanning residues 21–40 (ESNVFLKSKVANRFLQRTKR) is cleaved from the precursor. The Gla domain maps to 41–86 (SNSLFEEIRPGNIERECIEEKCSKEEAREVFEDNEKTETFWNVYVD). 4-carboxyglutamate is present on residues glutamate 46, glutamate 47, glutamate 54, glutamate 56, glutamate 59, glutamate 60, glutamate 65, glutamate 66, glutamate 69, glutamate 72, and glutamate 75. Residues cysteine 57 and cysteine 62 are joined by a disulfide bond. The region spanning 86–122 (DGDQCSSNPCHYRGTCKDGIGSYTCTCLPNYEGKNCE) is the EGF-like 1; calcium-binding domain. 11 disulfides stabilise this stretch: cysteine 90–cysteine 101, cysteine 95–cysteine 110, cysteine 112–cysteine 121, cysteine 129–cysteine 140, cysteine 136–cysteine 149, cysteine 151–cysteine 164, cysteine 172–cysteine 328, cysteine 216–cysteine 221, cysteine 236–cysteine 252, cysteine 376–cysteine 390, and cysteine 401–cysteine 429. Residue serine 92 is glycosylated (O-linked (Hex...) serine). Positions 129–164 (CRVDNGNCWHFCKRVQSETQCSCAESYRLGVDGHSC) constitute an EGF-like 2 domain. The propeptide at 182 to 209 (REASLPDFVQSQKATLLKKSDNPSPDIR) is activation peptide. The region spanning 210 to 453 (IVNGMDCKLG…FIPWIKKIMS (244 aa)) is the Peptidase S1 domain. Residue histidine 251 is the Charge relay system of the active site. N-linked (GlcNAc...) asparagine glycosylation is present at asparagine 254. Catalysis depends on aspartate 308, which acts as the Charge relay system. Catalysis depends on serine 405, which acts as the Charge relay system.

Belongs to the peptidase S1 family. Snake venom subfamily. As to quaternary structure, heterodimer of a light chain and a heavy chain; disulfide-linked. Post-translationally, gamma-carboxyglutamate residues are formed by vitamin K dependent carboxylation. These residues are essential for the binding of calcium. In terms of tissue distribution, expressed by the venom gland.

It is found in the secreted. The enzyme catalyses Selective cleavage of Arg-|-Thr and then Arg-|-Ile bonds in prothrombin to form thrombin.. Functionally, snake prothrombin activator that attacks the hemostatic system of prey. This protein is functionally similar to blood coagulation factor Xa. This chain is Venom prothrombin activator notecarin-D1, found in Notechis scutatus scutatus (Mainland tiger snake).